The primary structure comprises 191 residues: Ribonuclease HII (191 aa).

An RNase H type-2 domain is found at 7–191 (ILMAGVDEVG…YSPVADLISK (185 aa)). A divalent metal cation is bound by residues Asp13, Glu14, and Asp103.

Belongs to the RNase HII family. Mn(2+) is required as a cofactor. The cofactor is Mg(2+).

It localises to the cytoplasm. The catalysed reaction is Endonucleolytic cleavage to 5'-phosphomonoester.. Functionally, endonuclease that specifically degrades the RNA of RNA-DNA hybrids. The polypeptide is Ribonuclease HII (Legionella pneumophila subsp. pneumophila (strain Philadelphia 1 / ATCC 33152 / DSM 7513)).